The following is a 331-amino-acid chain: MDSLTTALGSVPQVVQWALAGVGALYISAKVLSYLHLVLNLFILGGTNLSKYGKKGSWAVVTGASDGLGKEFASQLAAKGFNIVLVSRTESKLKELAKELEAKNGSLKTKVLAMDYEQDNDDDYEKLGQLLSGLDVAILINNVGRSHSIPVPFLQTPREELQNIVTINCLGTLKTTQVVAPIMAQRKRGLILTMGSFGGWMPTPFLATYSGSKAFLQHWSTSLAEELRSSGVDVHLVLSYLIVSAMSKVRRPSAMVPTPRAFVRSALGKIGCATQNVAYTYTPWWSHAIMQWWVENTIGIGSKIGLQVNLKMHKDIRTRALKKAEREAKKA.

The helical transmembrane segment at 15–35 (VQWALAGVGALYISAKVLSYL) threads the bilayer. Residues valine 60, aspartate 115, aspartate 123, asparagine 142, tyrosine 209, lysine 213, isoleucine 242, and serine 244 each contribute to the NADP(+) site. Catalysis depends on tyrosine 209, which acts as the Proton donor. The active-site Lowers pKa of active site Tyr is the lysine 213.

The protein belongs to the short-chain dehydrogenases/reductases (SDR) family.

The protein resides in the endoplasmic reticulum membrane. The enzyme catalyses a very-long-chain (3R)-3-hydroxyacyl-CoA + NADP(+) = a very-long-chain 3-oxoacyl-CoA + NADPH + H(+). It functions in the pathway lipid metabolism; fatty acid biosynthesis. Component of the microsomal membrane bound fatty acid elongation system, which produces the 26-carbon very long-chain fatty acids (VLCFA) from palmitate. Catalyzes the reduction of the 3-ketoacyl-CoA intermediate that is formed in each cycle of fatty acid elongation. VLCFAs serve as precursors for ceramide and sphingolipids. The polypeptide is Very-long-chain 3-oxoacyl-CoA reductase (Pyricularia oryzae (strain 70-15 / ATCC MYA-4617 / FGSC 8958) (Rice blast fungus)).